A 426-amino-acid chain; its full sequence is DNA primase DnaG (426 aa).

The 77-residue stretch at 165-241 (DEIIIVEGRA…DIDYVAKAPP (77 aa)) folds into the Toprim domain. Glu-171, Asp-215, and Asp-217 together coordinate Mg(2+). The segment at 278 to 298 (PAVEERPQPPQPQPPAVQPVQ) is disordered. The span at 285–294 (QPPQPQPPAV) shows a compositional bias: pro residues.

This sequence belongs to the archaeal DnaG primase family. In terms of assembly, forms a ternary complex with MCM helicase and DNA. Component of the archaeal exosome complex. It depends on Mg(2+) as a cofactor.

The enzyme catalyses ssDNA + n NTP = ssDNA/pppN(pN)n-1 hybrid + (n-1) diphosphate.. In terms of biological role, RNA polymerase that catalyzes the synthesis of short RNA molecules used as primers for DNA polymerase during DNA replication. Also part of the exosome, which is a complex involved in RNA degradation. Acts as a poly(A)-binding protein that enhances the interaction between heteromeric, adenine-rich transcripts and the exosome. This is DNA primase DnaG from Hyperthermus butylicus (strain DSM 5456 / JCM 9403 / PLM1-5).